An 86-amino-acid chain; its full sequence is Small ribosomal subunit protein bS16c (86 aa).

Belongs to the bacterial ribosomal protein bS16 family.

It is found in the plastid. It localises to the chloroplast. The polypeptide is Small ribosomal subunit protein bS16c (Liriodendron tulipifera (Tuliptree)).